A 339-amino-acid polypeptide reads, in one-letter code: DNA-directed RNA polymerase subunit alpha (339 aa).

Residues 1 to 233 (MVREEVAGST…DLFLPFLHAE (233 aa)) are alpha N-terminal domain (alpha-NTD). Positions 264–339 (KKGIPLNYIF…IDLLKNKLSF (76 aa)) are alpha C-terminal domain (alpha-CTD).

It belongs to the RNA polymerase alpha chain family. As to quaternary structure, in plastids the minimal PEP RNA polymerase catalytic core is composed of four subunits: alpha, beta, beta', and beta''. When a (nuclear-encoded) sigma factor is associated with the core the holoenzyme is formed, which can initiate transcription.

The protein resides in the plastid. It is found in the chloroplast. The catalysed reaction is RNA(n) + a ribonucleoside 5'-triphosphate = RNA(n+1) + diphosphate. DNA-dependent RNA polymerase catalyzes the transcription of DNA into RNA using the four ribonucleoside triphosphates as substrates. This Psathyrostachys rupestris (Hordeum rupestre) protein is DNA-directed RNA polymerase subunit alpha.